A 429-amino-acid polypeptide reads, in one-letter code: Alanine aminotransferase (429 aa).

L-alanine-binding residues include G65 and N204. K265 carries the N6-(pyridoxal phosphate)lysine modification. R403 provides a ligand contact to L-alanine.

This sequence belongs to the class-I pyridoxal-phosphate-dependent aminotransferase family. In terms of assembly, homodimer. Requires pyridoxal 5'-phosphate as cofactor.

Its subcellular location is the cytoplasm. It catalyses the reaction L-alanine + 2-oxoglutarate = pyruvate + L-glutamate. This chain is Alanine aminotransferase (aspC), found in Mycobacterium bovis (strain ATCC BAA-935 / AF2122/97).